A 222-amino-acid polypeptide reads, in one-letter code: Putative N-acetylmannosamine-6-phosphate 2-epimerase (222 aa).

The protein belongs to the NanE family.

It carries out the reaction an N-acyl-D-glucosamine 6-phosphate = an N-acyl-D-mannosamine 6-phosphate. It participates in amino-sugar metabolism; N-acetylneuraminate degradation; D-fructose 6-phosphate from N-acetylneuraminate: step 3/5. Its function is as follows. Converts N-acetylmannosamine-6-phosphate (ManNAc-6-P) to N-acetylglucosamine-6-phosphate (GlcNAc-6-P). The polypeptide is Putative N-acetylmannosamine-6-phosphate 2-epimerase (Staphylococcus aureus (strain MSSA476)).